The chain runs to 635 residues: MGVVTVPESNKQSVAAKRAFRPSSSIRHTPQWPVSDVTSDLTIEVGSATFSLHKFPLVSRSGRIRKLVLESKDTNLNLAAVPGGSESFELAAKFCYGVGVQYNSSNIAALRCVAHYLEMTEDLSEKNLEARTEAYLKDSIFNDISNSITVLHSCERLLPVAEEINLVGRLVNAIAVNACKEQLASGLLKLDQSFSCGVPETAKPCDWWGRSLPILKLDFFQRVLSAMKSKGLNHDIISDILMSYARKSLQIIREPNLVKSDSDLQRKQRIVLEAVVGLLPTQANKSSIPISFLSSLLKTAIGSGTSVSCRSDLERRISHLLDQAILEDILIPANIGAMYDTDSVQRIFSMFLNLDECEYRDDDDDEEDAVDESEMAMYDFEGAESPKQSSIFKVSKLMDSYLAEVALDSSLPPSKFIALAELLPDHARVVCDGLYRAVDIFLKVHPHMKDSERYRLCKTVSCKKLSQDASSHAAQNERLPVQIAVQVLFYEQTRLKNAMTSGGGTGGSNQSQFFLFPNRSGSGMASGAISPRDNYASVRRENRELRLEVARMRMRLTDLEKDHVSMKRDFVKPQSRRRRYGMLRKLSRGLNKLNAIVLRFRSSQSVASSGKKHTEEKTNSERRFMFQKRRCHSVS.

In terms of domain architecture, BTB spans 39 to 104 (SDLTIEVGSA…CYGVGVQYNS (66 aa)). Residues 206-494 (DWWGRSLPIL…VQVLFYEQTR (289 aa)) enclose the NPH3 domain. A Phosphotyrosine modification is found at Tyr-435. A disordered region spans residues 604 to 635 (QSVASSGKKHTEEKTNSERRFMFQKRRCHSVS). Over residues 612–624 (KHTEEKTNSERRF) the composition is skewed to basic and acidic residues. Over residues 625-635 (MFQKRRCHSVS) the composition is skewed to basic residues.

Belongs to the NPH3 family.

It functions in the pathway protein modification; protein ubiquitination. Its function is as follows. May act as a substrate-specific adapter of an E3 ubiquitin-protein ligase complex (CUL3-RBX1-BTB) which mediates the ubiquitination and subsequent proteasomal degradation of target proteins. The polypeptide is BTB/POZ domain-containing protein SETH6 (SETH6) (Arabidopsis thaliana (Mouse-ear cress)).